Consider the following 227-residue polypeptide: Octanoyltransferase (227 aa).

One can recognise a BPL/LPL catalytic domain in the interval aspartate 35–alanine 210. Residues arginine 74–histidine 81, serine 141–glycine 143, and glycine 154–alanine 156 contribute to the substrate site. Cysteine 172 acts as the Acyl-thioester intermediate in catalysis.

This sequence belongs to the LipB family.

The protein resides in the cytoplasm. It catalyses the reaction octanoyl-[ACP] + L-lysyl-[protein] = N(6)-octanoyl-L-lysyl-[protein] + holo-[ACP] + H(+). The protein operates within protein modification; protein lipoylation via endogenous pathway; protein N(6)-(lipoyl)lysine from octanoyl-[acyl-carrier-protein]: step 1/2. Functionally, catalyzes the transfer of endogenously produced octanoic acid from octanoyl-acyl-carrier-protein onto the lipoyl domains of lipoate-dependent enzymes. Lipoyl-ACP can also act as a substrate although octanoyl-ACP is likely to be the physiological substrate. This Pectobacterium atrosepticum (strain SCRI 1043 / ATCC BAA-672) (Erwinia carotovora subsp. atroseptica) protein is Octanoyltransferase.